A 241-amino-acid polypeptide reads, in one-letter code: Ras-like protein 1 (241 aa).

Residues 17–22 (GVGKTA), 33–39 (VETYDPT), 63–64 (AG), 138–141 (NKSD), and 168–170 (SAK) each bind GTP. An Effector region motif is present at residues 36 to 44 (YDPTIEDSY). Residues 190 to 241 (RQQASRPSLPGNSRTKTGGMGKSESFYQSDGKRGSRKDGEKHRSKPIKCVIL) are disordered. Residues 191-205 (QQASRPSLPGNSRTK) show a composition bias toward polar residues. A compositionally biased stretch (basic and acidic residues) spans 219–230 (DGKRGSRKDGEK). Cysteine 238 bears the Cysteine methyl ester mark. Cysteine 238 carries the S-farnesyl cysteine lipid modification. Residues 239-241 (VIL) constitute a propeptide, removed in mature form.

This sequence belongs to the small GTPase superfamily. Ras family. Interacts with farnesyltransferase beta subunit RAM1.

The protein localises to the cell membrane. Its activity is regulated as follows. Alternates between an inactive form bound to GDP and an active form bound to GTP. Activated by a guanine nucleotide-exchange factor (GEF) and inactivated by a GTPase-activating protein (GAP). Its function is as follows. Modulates the activity of the adenylate cyclase catalytic subunit and therefore affects the biosynthesis of cyclic-AMP. Plays a role in both surface attachment and surface recognition of appressoria, a highly specialized infection structure for plant penetration. Regulates appressorium formation by coordinated regulation of cAMP signaling and Pmk1 MAPK pathways. The chain is Ras-like protein 1 from Pyricularia oryzae (strain 70-15 / ATCC MYA-4617 / FGSC 8958) (Rice blast fungus).